The sequence spans 321 residues: Sporulation protein cse15 (321 aa).

Coiled-coil stretches lie at residues 37-70 and 108-205; these read FHQK…TKEK and IEEK…KEKL. Composition is skewed to basic and acidic residues over residues 234 to 243 and 282 to 293; these read GTKQKEKTEE and AKSHTIEELKNR. Disordered regions lie at residues 234–253 and 274–293; these read GTKQ…AQPN and AHAQ…LKNR.

This is Sporulation protein cse15 (cse15) from Bacillus subtilis (strain 168).